A 726-amino-acid polypeptide reads, in one-letter code: Transmembrane channel-like protein 8 (726 aa).

Over 1–114 the chain is Cytoplasmic; sequence MLLPRSVSSE…GIRSYFTFLR (114 aa). S6 carries the post-translational modification Phosphoserine. A helical membrane pass occupies residues 115–135; it reads FLLLLNLLSLLLTASFVLLPL. Topologically, residues 136 to 200 are lumenal; the sequence is VWLRPPDPGP…VGPESSSVYS (65 aa). N148 is a glycosylation site (N-linked (GlcNAc...) asparagine). The helical transmembrane segment at 201 to 221 threads the bilayer; sequence IRLAYLLSPLACLLLCFCGTL. Residues 222 to 299 lie on the Cytoplasmic side of the membrane; it reads RRMVKGLPQK…AQTACRLLSY (78 aa). A helical membrane pass occupies residues 300–320; sequence LRVNVLNGLLVVGAISAIFWA. At 321–338 the chain is on the lumenal side; that stretch reads TKYSQDNKEESLFLLLQY. Residues 339 to 359 traverse the membrane as a helical segment; that stretch reads LPPGVIALVNFLGPLLFTFLV. The Cytoplasmic portion of the chain corresponds to 360–426; it reads QLENYPPNTE…QCWENSVGEE (67 aa). A TMC domain region spans residues 362 to 530; that stretch reads ENYPPNTEVN…SSRPFRASSS (169 aa). A helical membrane pass occupies residues 427–447; that stretch reads LYKLSIFNFLLTVAFAFLVTL. At 448-488 the chain is on the lumenal side; that stretch reads PRRLLVDRFSGRFWAWLEREEFLVPKNVLDIVAGQTVTWMG. The chain crosses the membrane as a helical span at residues 489-509; it reads LFYCPLLPLLNSVFLFLTFYI. The Cytoplasmic portion of the chain corresponds to 510–531; sequence KKYTLLKNSRASSRPFRASSST. Residues 532-552 form a helical membrane-spanning segment; that stretch reads FFFQLVLLLGLLLAAVPLGYV. The Lumenal portion of the chain corresponds to 553–594; the sequence is VSSIHSSWDCGLFTNYSAPWQVVPELVALGLPPIGQRALHYL. The N-linked (GlcNAc...) asparagine glycan is linked to N567. A helical membrane pass occupies residues 595–615; sequence GSHAFSFPLLIMLSLVLTVCV. At 616-726 the chain is on the cytoplasmic side; the sequence is SQTQANARAI…RFRFPSGAEL (111 aa). The disordered stretch occupies residues 651-726; the sequence is PEPGPSDSPG…RFRFPSGAEL (76 aa). The span at 652–662 shows a compositional bias: pro residues; sequence EPGPSDSPGPK. S658 and S673 each carry phosphoserine.

This sequence belongs to the TMC family. In terms of assembly, interacts with TMC6. Interacts and forms a complex with TMC6 and CIB1; the interaction stabilizes each component of the complex. Interacts and forms a complex with TMC6 and SLC30A1/ZNT1; the interaction regulates zinc transport into the ER. Interacts with TRADD; the interaction competes with TRADD/RIPK1/TRAF2/cIAPs complex I formation and facilites complex II formation. As to quaternary structure, (Microbial infection) Interacts with human papillomavirus 16/HPV16 protein E5; the interaction alleviates TMC8-mediated transcription factors inhibition. In terms of tissue distribution, expressed in placenta, prostate and testis.

It is found in the endoplasmic reticulum membrane. It localises to the golgi apparatus membrane. Its subcellular location is the nucleus membrane. Its function is as follows. Acts as a regulatory protein involved in the regulation of numerous cellular processes. Together with its homolog TMC6/EVER1, forms a complex with calcium-binding protein CIB1 in lymphocytes and keratynocytes where TMC6 and TMC8 stabilize CIB1 levels and reciprocally. Together with TMC6, also forms a complex with and activates zinc transporter ZNT1 at the ER membrane of keratynocytes, thereby facilitating zinc uptake into the ER. Also inhibits receptor-mediated calcium release from ER stores and calcium activated and volume regulated chloride channels. Down-regulates the activity of transcription factors induced by zinc and cytokines. Also sequesters TRADD which impairs the recruitment of TRAF2 and RIPK1 in the pro-survival complex I and promotes proapoptotic complex II formation, and may therefore be involved in TNF-induced cell death/survival decisions. The chain is Transmembrane channel-like protein 8 from Homo sapiens (Human).